A 319-amino-acid polypeptide reads, in one-letter code: Transmembrane and ubiquitin-like domain-containing protein 2 (319 aa).

A helical membrane pass occupies residues 36–56; the sequence is VMVVAGVVVLTLALVLAWLST. Disordered stretches follow at residues 88 to 130 and 146 to 165; these read VNQG…GDME and QAGLESSRPEASLGLDDSTC. Positions 95-111 are enriched in basic and acidic residues; sequence PTEHPHPSGGSDDKAEE. The region spanning 173–246 is the Ubiquitin-like domain; sequence INVRLKFLND…IHCHRSPPGA (74 aa). 2 consecutive transmembrane segments (helical) span residues 264-284 and 293-313; these read LGVNVGSLMVPVFVVLLGVVW and FFTAPATVSLVGVTVFFSFLV.

Its subcellular location is the membrane. This is Transmembrane and ubiquitin-like domain-containing protein 2 (Tmub2) from Rattus norvegicus (Rat).